A 167-amino-acid polypeptide reads, in one-letter code: CASP-like protein 3 (167 aa).

Topologically, residues 1–2 (MK) are cytoplasmic. Residues 3–23 (IIAIAPRIGAAVLSLVAFSVM) traverse the membrane as a helical segment. At 24 to 48 (ASTGERRSGAGSTFKVKFSDFQAYN) the chain is on the extracellular side. The chain crosses the membrane as a helical span at residues 49–69 (YLIALNVILFVYSTVQLVMLV). Residues 70 to 80 (NSNHNSSFSSP) lie on the Cytoplasmic side of the membrane. A helical transmembrane segment spans residues 81-101 (FKWVLGVYICDQLLAFLLFSA). Residues 102 to 137 (SSSAATASELSRHGLHNIWPPACATWKLWTFCSKAE) are Extracellular-facing. Residues 138-158 (AAVAMSFLSSFFIITSSILSG) form a helical membrane-spanning segment. Residues 159-167 (YHLSKVPAV) are Cytoplasmic-facing.

It belongs to the Casparian strip membrane proteins (CASP) family. As to quaternary structure, homodimer and heterodimers.

Its subcellular location is the cell membrane. This Osmunda lancea (Fern) protein is CASP-like protein 3.